The primary structure comprises 80 residues: RNA-binding protein Hfq (80 aa).

Positions 10-69 (DPFLNALRKEHVPVSIYLVNGIKLQGNIESFDQYVVLLRNTVTQMVYKHAISTVVPARPV) constitute a Sm domain.

This sequence belongs to the Hfq family. As to quaternary structure, homohexamer.

RNA chaperone that binds small regulatory RNA (sRNAs) and mRNAs to facilitate mRNA translational regulation in response to envelope stress, environmental stress and changes in metabolite concentrations. Also binds with high specificity to tRNAs. The chain is RNA-binding protein Hfq from Burkholderia ambifaria (strain ATCC BAA-244 / DSM 16087 / CCUG 44356 / LMG 19182 / AMMD) (Burkholderia cepacia (strain AMMD)).